The chain runs to 179 residues: Protein GrpE (179 aa).

The segment at 1-29 (MQDQDKYAEQAASIEDPVTAEAASATTPT) is disordered.

Belongs to the GrpE family. Homodimer.

It is found in the cytoplasm. Functionally, participates actively in the response to hyperosmotic and heat shock by preventing the aggregation of stress-denatured proteins, in association with DnaK and GrpE. It is the nucleotide exchange factor for DnaK and may function as a thermosensor. Unfolded proteins bind initially to DnaJ; upon interaction with the DnaJ-bound protein, DnaK hydrolyzes its bound ATP, resulting in the formation of a stable complex. GrpE releases ADP from DnaK; ATP binding to DnaK triggers the release of the substrate protein, thus completing the reaction cycle. Several rounds of ATP-dependent interactions between DnaJ, DnaK and GrpE are required for fully efficient folding. This chain is Protein GrpE, found in Janthinobacterium sp. (strain Marseille) (Minibacterium massiliensis).